The chain runs to 65 residues: Cecropin (65 aa).

Positions 1–23 are cleaved as a signal peptide; sequence MNFVKVLFFISACILIMLSAVSG.

It belongs to the cecropin family.

It localises to the secreted. Has antibacterial activity. The polypeptide is Cecropin (LOC113514368) (Galleria mellonella (Greater wax moth)).